The sequence spans 124 residues: Large ribosomal subunit protein bL12 (124 aa).

This sequence belongs to the bacterial ribosomal protein bL12 family. As to quaternary structure, homodimer. Part of the ribosomal stalk of the 50S ribosomal subunit. Forms a multimeric L10(L12)X complex, where L10 forms an elongated spine to which 2 to 4 L12 dimers bind in a sequential fashion. Binds GTP-bound translation factors.

Functionally, forms part of the ribosomal stalk which helps the ribosome interact with GTP-bound translation factors. Is thus essential for accurate translation. The polypeptide is Large ribosomal subunit protein bL12 (Chlorobium chlorochromatii (strain CaD3)).